The sequence spans 435 residues: 3-ketoacyl-CoA thiolase (435 aa).

C98 (acyl-thioester intermediate) is an active-site residue. Active-site proton acceptor residues include H391 and C421.

Belongs to the thiolase-like superfamily. Thiolase family. As to quaternary structure, heterotetramer of two alpha chains (FadJ) and two beta chains (FadI).

The protein localises to the cytoplasm. It catalyses the reaction an acyl-CoA + acetyl-CoA = a 3-oxoacyl-CoA + CoA. The protein operates within lipid metabolism; fatty acid beta-oxidation. Its function is as follows. Catalyzes the final step of fatty acid oxidation in which acetyl-CoA is released and the CoA ester of a fatty acid two carbons shorter is formed. The sequence is that of 3-ketoacyl-CoA thiolase from Vibrio vulnificus (strain YJ016).